The sequence spans 1203 residues: Delphilin (1203 aa).

Positions 1 to 79 (MPATNQGWPE…VPPSLGVLPG (79 aa)) constitute a PDZ 1 domain. Alanine 3 carries S-palmitoyl cysteine lipidation. The tract at residues 215 to 270 (GAQRLRRSRSEERPERLLVSTRASAAPRRPDEPPPRKATSLLGGRTGPGGPRRTVR) is disordered. Residues 231–241 (LLVSTRASAAP) show a composition bias toward low complexity. In terms of domain architecture, PDZ 2 spans 268 to 345 (TVRVYKGNKS…MPTLVVEEGP (78 aa)). Residue serine 303 is modified to Phosphoserine. 4 disordered regions span residues 466 to 541 (ESSL…TPNP), 563 to 586 (IGTM…GPRT), 611 to 656 (LASP…PPSR), and 710 to 821 (SFVT…SHMS). Positions 500–509 (RSQGLETSLS) are enriched in polar residues. Phosphoserine is present on residues serine 572, serine 613, serine 644, and serine 647. The segment covering 611 to 625 (LASPSSSESHPYASL) has biased composition (low complexity). The segment covering 715 to 740 (ERSSASECVSSSEEGSSLTYSSISDH) has biased composition (low complexity). Pro residues predominate over residues 741-756 (IPPPPLSPPPPPPLPF). Residues 774–784 (QSLTKPLTQIN) are compositionally biased toward polar residues. Over residues 786-803 (PVPPPPPPPLPPPVPCAP) the composition is skewed to pro residues. In terms of domain architecture, FH2 spans 812–1203 (HRRSETSHMS…SSGMVSPLAW (392 aa)).

In terms of assembly, interacts with C-terminus of the glutamate receptor GRID2 via PDZ domain. Isoform 2 also interacts with Profilin-2/PFN2 and with the monocarboxylate transporter SLC16A7 via PDZ domain. The interaction of isoform 2 with GRID2 is dependent on GRID2 phosphorylation by PKA. Post-translationally, isoform 2 is palmitoylated. Palmitoylation of isoform 2 is necessary for the enhanced cell surface expression of GRID2, and is also responsible for the accumulation of isoform 2 within dendritic spines. Isoform 1 and isoform 2 are differentially localized, probably modulating GRID2 signaling in neurons. As to expression, isoform 1 is expressed in the cerebellum, but not in the cerebral cortex. Isoform 2 is expressed in the cell body of purkinge cells of the cerebellum and weakly expressed in the cerebrum and the brainstem as well as various nuclei of the thalamus. Isoform 2 is highly expressed in the cerebral cortex than in the cerebellum. Isoform 3 is expressed in the cerebellum and cerebrum.

Its subcellular location is the postsynaptic cell membrane. The protein resides in the cell projection. The protein localises to the dendritic spine. It is found in the synapse. It localises to the cell membrane. Functionally, postsynaptic scaffolding protein at the Purkinje cell synapse, where it may serve to link GRID2 with actin cytoskeleton and various signaling molecules. This chain is Delphilin (Grid2ip), found in Mus musculus (Mouse).